Reading from the N-terminus, the 866-residue chain is Translation initiation factor IF-2 (866 aa).

2 disordered regions span residues 1-63 (MTND…AAVQ) and 92-257 (VVRA…RGRS). The segment covering 26 to 36 (ETGQVRQSFSH) has biased composition (polar residues). Residues 92-135 (VVRAAEEAERKRLEEIERRRREEEEARLKVEEEARRKAEEEAAR) are compositionally biased toward basic and acidic residues. Low complexity-rich tracts occupy residues 152-164 (VAPAAPQVAAAPQ) and 179-197 (PDASARPAAEAPRSPTEAP). Residues 365–533 (SRPPVVTVMG…AILLQSEILD (169 aa)) form the tr-type G domain. Residues 374 to 381 (GHVDHGKT) are G1. Residue 374–381 (GHVDHGKT) participates in GTP binding. A G2 region spans residues 399 to 403 (GITQH). Positions 421–424 (DTPG) are G3. Residues 421–425 (DTPGH) and 475–478 (NKMD) each bind GTP. Positions 475-478 (NKMD) are G4. Residues 511–513 (SAK) form a G5 region.

The protein belongs to the TRAFAC class translation factor GTPase superfamily. Classic translation factor GTPase family. IF-2 subfamily.

The protein resides in the cytoplasm. One of the essential components for the initiation of protein synthesis. Protects formylmethionyl-tRNA from spontaneous hydrolysis and promotes its binding to the 30S ribosomal subunits. Also involved in the hydrolysis of GTP during the formation of the 70S ribosomal complex. This chain is Translation initiation factor IF-2, found in Rhodospirillum rubrum (strain ATCC 11170 / ATH 1.1.1 / DSM 467 / LMG 4362 / NCIMB 8255 / S1).